The chain runs to 205 residues: Large ribosomal subunit protein uL18 (205 aa).

This sequence belongs to the universal ribosomal protein uL18 family. Part of the 50S ribosomal subunit. Contacts the 5S and 23S rRNAs.

Its function is as follows. This is one of the proteins that bind and probably mediate the attachment of the 5S RNA into the large ribosomal subunit, where it forms part of the central protuberance. The sequence is that of Large ribosomal subunit protein uL18 from Haloquadratum walsbyi (strain DSM 16790 / HBSQ001).